The chain runs to 536 residues: Zinc finger CCCH domain-containing protein 18 (536 aa).

A C3H1-type zinc finger spans residues 156–183; it reads EFPVKICHYFNKGFCKHGNNCRYFHGQI. Residues 211 to 294 enclose the HTH OST-type domain; it reads SLEKLEGEII…HGQHSVILAE (84 aa). The region spanning 317–392 is the RRM domain; sequence RQIYLTFPAE…ARVLVKPYRE (76 aa).

In terms of biological role, possesses ribonuclease activity in vitro. The protein is Zinc finger CCCH domain-containing protein 18 of Arabidopsis thaliana (Mouse-ear cress).